Reading from the N-terminus, the 170-residue chain is Universal stress protein MJ0531 (170 aa).

Belongs to the universal stress protein A family.

The protein is Universal stress protein MJ0531 of Methanocaldococcus jannaschii (strain ATCC 43067 / DSM 2661 / JAL-1 / JCM 10045 / NBRC 100440) (Methanococcus jannaschii).